Consider the following 342-residue polypeptide: Anthranilate phosphoribosyltransferase (342 aa).

5-phospho-alpha-D-ribose 1-diphosphate-binding positions include Gly-83, 86–87 (GD), Thr-91, 93–96 (NIST), 111–119 (KHGGRSVSS), and Ser-123. Residue Gly-83 participates in anthranilate binding. Ser-95 serves as a coordination point for Mg(2+). Arg-169 contacts anthranilate. Residues Asp-228 and Glu-229 each contribute to the Mg(2+) site.

Belongs to the anthranilate phosphoribosyltransferase family. In terms of assembly, homodimer. Mg(2+) serves as cofactor.

The enzyme catalyses N-(5-phospho-beta-D-ribosyl)anthranilate + diphosphate = 5-phospho-alpha-D-ribose 1-diphosphate + anthranilate. It participates in amino-acid biosynthesis; L-tryptophan biosynthesis; L-tryptophan from chorismate: step 2/5. Catalyzes the transfer of the phosphoribosyl group of 5-phosphorylribose-1-pyrophosphate (PRPP) to anthranilate to yield N-(5'-phosphoribosyl)-anthranilate (PRA). The protein is Anthranilate phosphoribosyltransferase of Laribacter hongkongensis (strain HLHK9).